The following is a 186-amino-acid chain: Ribosome-recycling factor (186 aa).

Belongs to the RRF family.

The protein resides in the cytoplasm. Responsible for the release of ribosomes from messenger RNA at the termination of protein biosynthesis. May increase the efficiency of translation by recycling ribosomes from one round of translation to another. This Chelativorans sp. (strain BNC1) protein is Ribosome-recycling factor.